The chain runs to 90 residues: Small ribosomal subunit protein uS15 (90 aa).

This sequence belongs to the universal ribosomal protein uS15 family. Part of the 30S ribosomal subunit. Forms a bridge to the 50S subunit in the 70S ribosome, contacting the 23S rRNA.

In terms of biological role, one of the primary rRNA binding proteins, it binds directly to 16S rRNA where it helps nucleate assembly of the platform of the 30S subunit by binding and bridging several RNA helices of the 16S rRNA. Forms an intersubunit bridge (bridge B4) with the 23S rRNA of the 50S subunit in the ribosome. This Helicobacter acinonychis (strain Sheeba) protein is Small ribosomal subunit protein uS15.